The chain runs to 464 residues: ATP synthase subunit beta (464 aa).

153–160 (GGAGVGKT) serves as a coordination point for ATP.

It belongs to the ATPase alpha/beta chains family. As to quaternary structure, F-type ATPases have 2 components, CF(1) - the catalytic core - and CF(0) - the membrane proton channel. CF(1) has five subunits: alpha(3), beta(3), gamma(1), delta(1), epsilon(1). CF(0) has three main subunits: a(1), b(2) and c(9-12). The alpha and beta chains form an alternating ring which encloses part of the gamma chain. CF(1) is attached to CF(0) by a central stalk formed by the gamma and epsilon chains, while a peripheral stalk is formed by the delta and b chains.

Its subcellular location is the cell inner membrane. The catalysed reaction is ATP + H2O + 4 H(+)(in) = ADP + phosphate + 5 H(+)(out). Functionally, produces ATP from ADP in the presence of a proton gradient across the membrane. The catalytic sites are hosted primarily by the beta subunits. This Burkholderia ambifaria (strain ATCC BAA-244 / DSM 16087 / CCUG 44356 / LMG 19182 / AMMD) (Burkholderia cepacia (strain AMMD)) protein is ATP synthase subunit beta.